Reading from the N-terminus, the 477-residue chain is Glycogen synthase (477 aa).

Residue Lys15 participates in ADP-alpha-D-glucose binding.

This sequence belongs to the glycosyltransferase 1 family. Bacterial/plant glycogen synthase subfamily.

The catalysed reaction is [(1-&gt;4)-alpha-D-glucosyl](n) + ADP-alpha-D-glucose = [(1-&gt;4)-alpha-D-glucosyl](n+1) + ADP + H(+). It participates in glycan biosynthesis; glycogen biosynthesis. Functionally, synthesizes alpha-1,4-glucan chains using ADP-glucose. The chain is Glycogen synthase from Cronobacter sakazakii (strain ATCC BAA-894) (Enterobacter sakazakii).